We begin with the raw amino-acid sequence, 1135 residues long: Topless-related protein 4 (1135 aa).

Residues 4–36 (LSRELVFLILQFLDEEKFKDTVHRLEKESGFFF) form the LisH domain. A CTLH domain is found at 34-92 (FFFNMRYFEDSVTAGEWDDVEKYLSGFTKVDDNRYSMKIFFEIRKQKYLEALDKKDHAK). S214 is modified (phosphoserine). The interval 281–303 (LKRERPRSPPTNSLSMDYQTADS) is disordered. Residues 290 to 303 (PTNSLSMDYQTADS) show a composition bias toward polar residues. 12 WD repeats span residues 355-395 (SQGS…KLVS), 417-456 (EYTA…DLRN), 462-503 (AHAG…KLHT), 506-547 (GHEA…SRVD), 550-593 (APGR…VKRT), 597-636 (LGKR…LLSS), 638-680 (AAEG…RILH), 776-815 (LLPA…RNLL), 843-881 (NKED…TMTT), 884-924 (APPP…VKSK), 927-966 (GHQK…KQAS), and 1020-1059 (ESSG…LKCR). The tract at residues 1095-1135 (DGGVHVIEPPGPEGKWGISAPPENGAGPSVSSAPGSDQQPR) is disordered. Low complexity predominate over residues 1119–1135 (GAGPSVSSAPGSDQQPR).

As to quaternary structure, tetramer. Interacts with WUS (via the C-terminal domain). Interacts with SPL (via EAR motif). Interacts with SPEAR3/TIE1. Binds to and corepresses GAF1/IDD2 at the promoter of GA20OX2 gene.

It localises to the nucleus. Its function is as follows. Transcription corepressor of Zinc finger transcription factors GAF1/IDD2 and ENY/IDD1 in regulation of gibberellin homeostasis and signaling. This Arabidopsis thaliana (Mouse-ear cress) protein is Topless-related protein 4 (TPR4).